The following is a 234-amino-acid chain: MQTPPESTDVKLDTLNEPSAHLIEKNVALPKDIFRSYLSYWIYEIARYTPVMILSLVIGVLVLLIIFFNDNEACVFNSAIFAFTSLVGLLIILSDGNPKLVSRRNFRTELLVDVITRKPAVEGKEWRIITYNMNQYLFNHGQWHTPYYFYSDEDCYRYFLRLVEGVTPKKQTATSIGNSPVTAKPEDAIESASPSSRLNYQNFLLKAAEIERQAQENYWRRRHPNIDALLKKTE.

Topologically, residues 1–47 are cytoplasmic; that stretch reads MQTPPESTDVKLDTLNEPSAHLIEKNVALPKDIFRSYLSYWIYEIAR. The residue at position 3 (Thr3) is a Phosphothreonine. Residues 48–68 traverse the membrane as a helical segment; sequence YTPVMILSLVIGVLVLLIIFF. The Extracellular segment spans residues 69–72; that stretch reads NDNE. The chain crosses the membrane as a helical span at residues 73–93; that stretch reads ACVFNSAIFAFTSLVGLLIIL. Over 94 to 234 the chain is Cytoplasmic; the sequence is SDGNPKLVSR…NIDALLKKTE (141 aa). The COPI binding stretch occupies residues 231–234; the sequence is KKTE.

It belongs to the DUP/COS family. In terms of assembly, interacts with MST27. Binds to coatomer proteins of COPI and SEC23/SEC24 of COPII coated vesicles.

The protein localises to the endoplasmic reticulum. The protein resides in the golgi apparatus. It localises to the cytoplasmic vesicle. Its subcellular location is the COPI-coated vesicle membrane. It is found in the COPII-coated vesicle membrane. Its function is as follows. Involved in protein trafficking vesicle formation, probably by stabilizing of coatomer at the Golgi membrane and thus allowing the efficient formation of COPI coated vesicles. This chain is Multicopy suppressor of SEC21 protein 28 (MST28), found in Saccharomyces cerevisiae (strain ATCC 204508 / S288c) (Baker's yeast).